We begin with the raw amino-acid sequence, 49 residues long: Large ribosomal subunit protein bL33B (49 aa).

Belongs to the bacterial ribosomal protein bL33 family.

The sequence is that of Large ribosomal subunit protein bL33B from Listeria welshimeri serovar 6b (strain ATCC 35897 / DSM 20650 / CCUG 15529 / CIP 8149 / NCTC 11857 / SLCC 5334 / V8).